The chain runs to 175 residues: tRNA-acetylating toxin 3 (175 aa).

Acetyl-CoA contacts are provided by L95, V97, G103, G105, G107, A108, D133, Q138, D141, and W142. The active site involves Y143. 2 residues coordinate acetyl-CoA: G145 and F146.

It belongs to the acetyltransferase family. GNAT subfamily. In terms of assembly, homodimer (in absence of antitoxin); has a condensed and elongated form. Forms a complex with cognate antitoxin TacA3. Forms a 4:2 antitoxin:toxin complex with cognate antitoxin TacA3. Forms a 4:4 antitoxin:toxin complex with promoter DNA, where 2 TacT3 dimers bridge 2 TacA3 dimers. Only TacA3 contacts promoter DNA in the octomeric form. TacT3 may contact DNA in the hexameric form.

It carries out the reaction glycyl-tRNA(Gly) + acetyl-CoA = N-acetylglycyl-tRNA(Gly) + CoA + H(+). Toxic component of a type II toxin-antitoxin (TA) system. Acetylates tRNA and inhibits translation. Acetylates only Gly-tRNA on all 3 Gly-tRNA(Gly) isoacceptors in situ. In vitro acetylates mainly Ile/Leu and Gly. Overexpression during the lag phase of a tacA3-tacT3 deletion strain leads to a 150-fold increase in persister cells in the presence of cefotaxime and a non-growth state in the absence of antibiotic. Persister cell formation and the growth defect are neutralized by cognate antitoxin TacA3, but not by TacA1 or TacA2. Plays a role in persister cell formation. Functionally, the TacA3-TacT3 complex both represses and derepresses expression of its own operon. The hexameric 4:2 TacA3-TacT3 complex binds promoter DNA and represses its transcription; both subunits are required. The octomeric 4:4 TacA3-TacT3 complex derepresses the operon. The shift from hexameric to octomeric complex probably alters DNA-binding, leading to dissociation from the operator DNA and derepression. The chain is tRNA-acetylating toxin 3 from Salmonella typhimurium (strain 14028s / SGSC 2262).